The primary structure comprises 327 residues: MFNDIPVFDYEDIQLIPNKCIITSRSQADTSVTLGKYQFKLPVIPANMQTIIDETIAEQLAKEGYFYIMHRFDEDSRKPFIKRMHEQGLIASISVGVKACEYEFVTSLKEDAPEFITIDIAHGHANSVIDMIKHIKTELPETFVIAGNVGTPEAVRELENAGADATKVGIGPGKVCITKVKTGFGTGGWQLAALRWCAKAARKPIIADGGIRTHGDIAKSIRFGASMVMIGSLFAGHFESPGKTVEVDGETFKEYYGSASEYQKGEHKNVEGKKILLPTKGHLSDTLTEMQQDLQSSISYAGGKDLDSLRHVDYVIVKNSIWNGDSI.

Cys-176 functions as the Thioimidate intermediate in the catalytic mechanism. 205–228 (IIADGGIRTHGDIAKSIRFGASMV) is an NADP(+) binding site.

The protein belongs to the IMPDH/GMPR family. GuaC type 2 subfamily.

It carries out the reaction IMP + NH4(+) + NADP(+) = GMP + NADPH + 2 H(+). Catalyzes the irreversible NADPH-dependent deamination of GMP to IMP. It functions in the conversion of nucleobase, nucleoside and nucleotide derivatives of G to A nucleotides, and in maintaining the intracellular balance of A and G nucleotides. The protein is GMP reductase of Streptococcus pyogenes serotype M1.